Here is a 97-residue protein sequence, read N- to C-terminus: Small ribosomal subunit protein bS6 (97 aa).

It belongs to the bacterial ribosomal protein bS6 family.

In terms of biological role, binds together with bS18 to 16S ribosomal RNA. In Listeria innocua serovar 6a (strain ATCC BAA-680 / CLIP 11262), this protein is Small ribosomal subunit protein bS6.